The chain runs to 550 residues: MAAKDVKFGNDARVKMLRGVNVLADAVKVTLGPKGRNVVLDKSFGAPAITKDGVTVAREIELEDKFENMGAQMVKEVASKANDAAGDGTTTATVLAQSIVTEGLKAVAAGMNPMDLKRGVDKAVIAAVEELKCLSVPCSDFKAIAQVGTISANSDETVGKLIAEAMEKVGKEGVITVEEGTGLQDELDVVEGMQFDRGYLSPYFINKPDTGSIELDNPFILLADKKISNNREMLPPLESVAKAGNLLIIAEDVEGEALATLVVNTMRGIVKVAAVKAPGFGDRRKAMLQDIATLTGSTVISEEIGLELEKTTIEDLGHAKRVVINKDTTTIIDGIGNESAIKGRVVQIRQQIEEATSDYDREKLQERVAKLAGGVAVIKVGAATEVEMKEKKARVEDALHATRAAVEEGVVAGGGVALIRVAGKISSLTGENEDQNVGIKVAIRAMESPLRQIVINAGEEASVIANNVKAGKGNYGYNAYSEQYGDMIKMGILDPTKVTRSALQYAASVAGLMITTECMITDLPKSDSSDLSNAGNGGMGGGMGGMGGMM.

Residues 30–33 (TLGP), K51, 87–91 (DGTTT), G414, and D494 contribute to the ATP site.

This sequence belongs to the chaperonin (HSP60) family. As to quaternary structure, forms a cylinder of 14 subunits composed of two heptameric rings stacked back-to-back. Interacts with the co-chaperonin GroES.

The protein localises to the cytoplasm. The enzyme catalyses ATP + H2O + a folded polypeptide = ADP + phosphate + an unfolded polypeptide.. Functionally, together with its co-chaperonin GroES, plays an essential role in assisting protein folding. The GroEL-GroES system forms a nano-cage that allows encapsulation of the non-native substrate proteins and provides a physical environment optimized to promote and accelerate protein folding. This chain is Chaperonin GroEL, found in Buchnera aphidicola subsp. Thelaxes suberi.